A 721-amino-acid polypeptide reads, in one-letter code: Polyribonucleotide nucleotidyltransferase (721 aa).

Residues aspartate 495 and aspartate 501 each contribute to the Mg(2+) site. The KH domain maps to 562–621 (PRLLSFRIDPELIGTVIGPGGRTIKGITERTNTKIDIEDGGIVTIASHDGAAAEEAQKII). Positions 631–699 (GEIFSGVVTR…SRGRINLTLR (69 aa)) constitute an S1 motif domain. The disordered stretch occupies residues 701–721 (VGQNNGMSYPEPTPTPVAPLN). Positions 711 to 721 (EPTPTPVAPLN) are enriched in pro residues.

The protein belongs to the polyribonucleotide nucleotidyltransferase family. Mg(2+) serves as cofactor.

The protein resides in the cytoplasm. The catalysed reaction is RNA(n+1) + phosphate = RNA(n) + a ribonucleoside 5'-diphosphate. Functionally, involved in mRNA degradation. Catalyzes the phosphorolysis of single-stranded polyribonucleotides processively in the 3'- to 5'-direction. The sequence is that of Polyribonucleotide nucleotidyltransferase from Prochlorococcus marinus (strain MIT 9215).